Here is a 177-residue protein sequence, read N- to C-terminus: Ribosome maturation factor RimM (177 aa).

A PRC barrel domain is found at Glu-100–Tyr-177.

This sequence belongs to the RimM family. In terms of assembly, binds ribosomal protein uS19.

It is found in the cytoplasm. In terms of biological role, an accessory protein needed during the final step in the assembly of 30S ribosomal subunit, possibly for assembly of the head region. Essential for efficient processing of 16S rRNA. May be needed both before and after RbfA during the maturation of 16S rRNA. It has affinity for free ribosomal 30S subunits but not for 70S ribosomes. The sequence is that of Ribosome maturation factor RimM from Psychrobacter arcticus (strain DSM 17307 / VKM B-2377 / 273-4).